Consider the following 24-residue polypeptide: Protein YriA (24 aa).

The polypeptide is Protein YriA (Escherichia coli (strain K12)).